Consider the following 213-residue polypeptide: ATP synthase peripheral stalk subunit OSCP, mitochondrial (213 aa).

A mitochondrion-targeting transit peptide spans 1-23 (MAAPATSVLSRQVRSFSTSVVRP). An SIFI-degron motif is present at residues 5–23 (ATSVLSRQVRSFSTSVVRP). Residues Lys60, Lys70, and Lys73 each carry the N6-acetyllysine modification. An N6-succinyllysine modification is found at Lys90. An N6-acetyllysine; alternate mark is found at Lys100 and Lys158. 2 positions are modified to N6-succinyllysine; alternate: Lys100 and Lys158. Residues Lys176 and Lys192 each carry the N6-acetyllysine modification. At Lys199 the chain carries N6-succinyllysine.

It belongs to the ATPase delta chain family. Component of the ATP synthase complex composed at least of ATP5F1A/subunit alpha, ATP5F1B/subunit beta, ATP5MC1/subunit c (homooctomer), MT-ATP6/subunit a, MT-ATP8/subunit 8, ATP5ME/subunit e, ATP5MF/subunit f, ATP5MG/subunit g, ATP5MK/subunit k, ATP5MJ/subunit j, ATP5F1C/subunit gamma, ATP5F1D/subunit delta, ATP5F1E/subunit epsilon, ATP5PF/subunit F6, ATP5PB/subunit b, ATP5PD/subunit d, ATP5PO/subunit OSCP. ATP synthase complex consists of a soluble F(1) head domain (subunits alpha(3) and beta(3)) - the catalytic core - and a membrane F(0) domain - the membrane proton channel (subunits c, a, 8, e, f, g, k and j). These two domains are linked by a central stalk (subunits gamma, delta, and epsilon) rotating inside the F1 region and a stationary peripheral stalk (subunits F6, b, d, and OSCP). In response to mitochondrial stress, the precursor protein is ubiquitinated by the SIFI complex in the cytoplasm before mitochondrial import, leading to its degradation. Within the SIFI complex, UBR4 initiates ubiquitin chain that are further elongated or branched by KCMF1. Expressed by the principal cells of the epididymis. Detected in flagella of epididymal sperm (at protein level).

Its subcellular location is the mitochondrion. The protein resides in the mitochondrion inner membrane. Its function is as follows. Subunit OSCP, of the mitochondrial membrane ATP synthase complex (F(1)F(0) ATP synthase or Complex V) that produces ATP from ADP in the presence of a proton gradient across the membrane which is generated by electron transport complexes of the respiratory chain. ATP synthase complex consist of a soluble F(1) head domain - the catalytic core - and a membrane F(1) domain - the membrane proton channel. These two domains are linked by a central stalk rotating inside the F(1) region and a stationary peripheral stalk. During catalysis, ATP synthesis in the catalytic domain of F(1) is coupled via a rotary mechanism of the central stalk subunits to proton translocation. In vivo, can only synthesize ATP although its ATP hydrolase activity can be activated artificially in vitro. Part of the complex F(0) domain. Part of the complex F(0) domain and the peripheric stalk, which acts as a stator to hold the catalytic alpha(3)beta(3) subcomplex and subunit a/ATP6 static relative to the rotary elements. The protein is ATP synthase peripheral stalk subunit OSCP, mitochondrial of Rattus norvegicus (Rat).